The primary structure comprises 236 residues: 2,3,4,5-tetrahydropyridine-2,6-dicarboxylate N-acetyltransferase (236 aa).

It belongs to the transferase hexapeptide repeat family. DapH subfamily.

It carries out the reaction (S)-2,3,4,5-tetrahydrodipicolinate + acetyl-CoA + H2O = L-2-acetamido-6-oxoheptanedioate + CoA. It functions in the pathway amino-acid biosynthesis; L-lysine biosynthesis via DAP pathway; LL-2,6-diaminopimelate from (S)-tetrahydrodipicolinate (acetylase route): step 1/3. In terms of biological role, catalyzes the transfer of an acetyl group from acetyl-CoA to tetrahydrodipicolinate. In Pediococcus pentosaceus (strain ATCC 25745 / CCUG 21536 / LMG 10740 / 183-1w), this protein is 2,3,4,5-tetrahydropyridine-2,6-dicarboxylate N-acetyltransferase.